A 91-amino-acid chain; its full sequence is Large ribosomal subunit protein eL31 (91 aa).

It belongs to the eukaryotic ribosomal protein eL31 family.

The chain is Large ribosomal subunit protein eL31 from Pyrobaculum calidifontis (strain DSM 21063 / JCM 11548 / VA1).